A 622-amino-acid chain; its full sequence is Cilia- and flagella-associated protein 206 (622 aa).

A disordered region spans residues 571 to 592; the sequence is QVYPPKDTSTQSMREDSTGVPR.

The protein belongs to the CFAP206 family.

Its subcellular location is the cytoplasm. The protein resides in the cytoskeleton. It localises to the cilium axoneme. The protein localises to the cilium basal body. Essential for sperm motility and is involved in the regulation of the beating frequency of motile cilia on the epithelial cells of the respiratory tract. Required for the establishment of radial spokes in sperm flagella. The chain is Cilia- and flagella-associated protein 206 from Macaca fascicularis (Crab-eating macaque).